The following is a 376-amino-acid chain: Putative glutamate--cysteine ligase 2 (376 aa).

It belongs to the glutamate--cysteine ligase type 2 family. YbdK subfamily.

It carries out the reaction L-cysteine + L-glutamate + ATP = gamma-L-glutamyl-L-cysteine + ADP + phosphate + H(+). ATP-dependent carboxylate-amine ligase which exhibits weak glutamate--cysteine ligase activity. This chain is Putative glutamate--cysteine ligase 2, found in Paracoccus denitrificans (strain Pd 1222).